The following is a 337-amino-acid chain: Holliday junction branch migration complex subunit RuvB (337 aa).

A large ATPase domain (RuvB-L) region spans residues 4–186 (ADRLIAADNP…FGIVQRLEYY (183 aa)). ATP is bound by residues I25, R26, G67, K70, T71, T72, 133–135 (EDY), R176, Y186, and R223. T71 contacts Mg(2+). The small ATPAse domain (RuvB-S) stretch occupies residues 187-257 (KVEDLQHIVQ…IADKALNMLD (71 aa)). A head domain (RuvB-H) region spans residues 260-337 (VRGFDYMDRK…LHFGIDKPDK (78 aa)). DNA contacts are provided by R296, R315, and R320.

Belongs to the RuvB family. Homohexamer. Forms an RuvA(8)-RuvB(12)-Holliday junction (HJ) complex. HJ DNA is sandwiched between 2 RuvA tetramers; dsDNA enters through RuvA and exits via RuvB. An RuvB hexamer assembles on each DNA strand where it exits the tetramer. Each RuvB hexamer is contacted by two RuvA subunits (via domain III) on 2 adjacent RuvB subunits; this complex drives branch migration. In the full resolvosome a probable DNA-RuvA(4)-RuvB(12)-RuvC(2) complex forms which resolves the HJ.

The protein resides in the cytoplasm. The enzyme catalyses ATP + H2O = ADP + phosphate + H(+). Its function is as follows. The RuvA-RuvB-RuvC complex processes Holliday junction (HJ) DNA during genetic recombination and DNA repair, while the RuvA-RuvB complex plays an important role in the rescue of blocked DNA replication forks via replication fork reversal (RFR). RuvA specifically binds to HJ cruciform DNA, conferring on it an open structure. The RuvB hexamer acts as an ATP-dependent pump, pulling dsDNA into and through the RuvAB complex. RuvB forms 2 homohexamers on either side of HJ DNA bound by 1 or 2 RuvA tetramers; 4 subunits per hexamer contact DNA at a time. Coordinated motions by a converter formed by DNA-disengaged RuvB subunits stimulates ATP hydrolysis and nucleotide exchange. Immobilization of the converter enables RuvB to convert the ATP-contained energy into a lever motion, pulling 2 nucleotides of DNA out of the RuvA tetramer per ATP hydrolyzed, thus driving DNA branch migration. The RuvB motors rotate together with the DNA substrate, which together with the progressing nucleotide cycle form the mechanistic basis for DNA recombination by continuous HJ branch migration. Branch migration allows RuvC to scan DNA until it finds its consensus sequence, where it cleaves and resolves cruciform DNA. The polypeptide is Holliday junction branch migration complex subunit RuvB (Aliivibrio fischeri (strain ATCC 700601 / ES114) (Vibrio fischeri)).